We begin with the raw amino-acid sequence, 523 residues long: Calcium-dependent protein kinase 34 (523 aa).

The disordered stretch occupies residues 1–60 (MGNCCSHGRDSDDNKEEPRPENGGGGVGAAEASVRASKHPPASPPPATKQGPIGPVLGRP). The N-myristoyl glycine moiety is linked to residue Gly2. The segment covering 7–20 (HGRDSDDNKEEPRP) has biased composition (basic and acidic residues). One can recognise a Protein kinase domain in the interval 68–326 (YTLGKELGRG…AAQVLNHPWI (259 aa)). Residues 74 to 82 (LGRGQFGVT) and Lys97 contribute to the ATP site. Residue Asp192 is the Proton acceptor of the active site. Phosphoserine is present on Ser232. Positions 332 to 362 (APDVPLDNAVMSRLKQFKAMNNFKKVALRVI) are autoinhibitory domain. EF-hand domains follow at residues 369–404 (EEIMGLKEMFKGMDTDNSGTITLEELRQGLAKQGTR), 405–440 (LSEYEVQQLMEAADADGNGTIDYGEFIAATMHINRL), 441–476 (DREEHLYSAFQHFDKDNSGYITTEELEQALREFGMN), and 480–511 (DIKEIISEVDGDNDGRINYEEFVAMMRKGNPD). Residues Asp382, Asp384, Ser386, Thr388, Glu393, Asp418, Asp420, Asn422, Thr424, Glu429, Asp454, Asp456, Ser458, Tyr460, Glu465, Asp489, Asp491, Asp493, Arg495, and Glu500 each contribute to the Ca(2+) site.

The protein belongs to the protein kinase superfamily. Ser/Thr protein kinase family. CDPK subfamily.

It is found in the membrane. The catalysed reaction is L-seryl-[protein] + ATP = O-phospho-L-seryl-[protein] + ADP + H(+). It carries out the reaction L-threonyl-[protein] + ATP = O-phospho-L-threonyl-[protein] + ADP + H(+). Its activity is regulated as follows. Activated by calcium. Autophosphorylation may play an important role in the regulation of the kinase activity. Functionally, may play a role in signal transduction pathways that involve calcium as a second messenger. The chain is Calcium-dependent protein kinase 34 (CPK34) from Arabidopsis thaliana (Mouse-ear cress).